The following is a 45-amino-acid chain: Large ribosomal subunit protein bL34 (45 aa).

The protein belongs to the bacterial ribosomal protein bL34 family.

The chain is Large ribosomal subunit protein bL34 from Corynebacterium urealyticum (strain ATCC 43042 / DSM 7109).